Here is a 292-residue protein sequence, read N- to C-terminus: Acetylglutamate kinase (292 aa).

Substrate contacts are provided by residues 64 to 65 (GG), Arg86, and Asn190.

This sequence belongs to the acetylglutamate kinase family. ArgB subfamily.

It localises to the cytoplasm. The catalysed reaction is N-acetyl-L-glutamate + ATP = N-acetyl-L-glutamyl 5-phosphate + ADP. Its pathway is amino-acid biosynthesis; L-arginine biosynthesis; N(2)-acetyl-L-ornithine from L-glutamate: step 2/4. Its function is as follows. Catalyzes the ATP-dependent phosphorylation of N-acetyl-L-glutamate. The protein is Acetylglutamate kinase of Geobacter sp. (strain M21).